Reading from the N-terminus, the 86-residue chain is Protein P17 (86 aa).

The interval 63–86 is disordered; the sequence is SPAEKPDNQPELTGITFEGDNNDQ.

Homotetramer.

Its function is as follows. Assembly protein that acts late in phage assembly, after capsid protein folding and multimerization, and sorting of membrane proteins has occurred. The major coat protein P3 and two assembly factors (P10 and P17) are needed during the assembly of the virus particle inside the host cell, when the capsid protein multimers are capable of enclosing the host-derived membrane, containing the virus-encoded membrane-associated proteins. The polypeptide is Protein P17 (XVII) (Enterobacteria phage PRD1 (Bacteriophage PRD1)).